Consider the following 477-residue polypeptide: Aspartyl/glutamyl-tRNA(Asn/Gln) amidotransferase subunit B (477 aa).

This sequence belongs to the GatB/GatE family. GatB subfamily. In terms of assembly, heterotrimer of A, B and C subunits.

The catalysed reaction is L-glutamyl-tRNA(Gln) + L-glutamine + ATP + H2O = L-glutaminyl-tRNA(Gln) + L-glutamate + ADP + phosphate + H(+). The enzyme catalyses L-aspartyl-tRNA(Asn) + L-glutamine + ATP + H2O = L-asparaginyl-tRNA(Asn) + L-glutamate + ADP + phosphate + 2 H(+). Functionally, allows the formation of correctly charged Asn-tRNA(Asn) or Gln-tRNA(Gln) through the transamidation of misacylated Asp-tRNA(Asn) or Glu-tRNA(Gln) in organisms which lack either or both of asparaginyl-tRNA or glutaminyl-tRNA synthetases. The reaction takes place in the presence of glutamine and ATP through an activated phospho-Asp-tRNA(Asn) or phospho-Glu-tRNA(Gln). The polypeptide is Aspartyl/glutamyl-tRNA(Asn/Gln) amidotransferase subunit B (Legionella pneumophila (strain Lens)).